The primary structure comprises 236 residues: Conserved regulator of innate immunity protein 3 (236 aa).

The transit peptide at 1–36 (MNTASLVRSLSRVALRSSQVVRMAAPRHFSQSAKVL) directs the protein to the mitochondrion.

It belongs to the MAM33 family.

The protein localises to the mitochondrion matrix. This is Conserved regulator of innate immunity protein 3 (cri-3) from Caenorhabditis elegans.